Reading from the N-terminus, the 951-residue chain is Protein translocase subunit SecA (951 aa).

ATP is bound by residues Gln-90, 108–112 (GEGKT), and Asp-509.

It belongs to the SecA family. As to quaternary structure, monomer and homodimer. Part of the essential Sec protein translocation apparatus which comprises SecA, SecYEG and auxiliary proteins SecDF. Other proteins may also be involved.

The protein localises to the cell inner membrane. It is found in the cellular thylakoid membrane. Its subcellular location is the cytoplasm. The enzyme catalyses ATP + H2O + cellular proteinSide 1 = ADP + phosphate + cellular proteinSide 2.. Functionally, part of the Sec protein translocase complex. Interacts with the SecYEG preprotein conducting channel. Has a central role in coupling the hydrolysis of ATP to the transfer of proteins into and across the cell membrane, serving as an ATP-driven molecular motor driving the stepwise translocation of polypeptide chains across the membrane. Its function is as follows. Probably participates in protein translocation into and across both the cytoplasmic and thylakoid membranes in cyanobacterial cells. This is Protein translocase subunit SecA from Prochlorococcus marinus (strain MIT 9303).